Here is a 262-residue protein sequence, read N- to C-terminus: Glucosamine-6-phosphate deaminase (262 aa).

D63 serves as the catalytic Proton acceptor; for enolization step. The active-site For ring-opening step is the N129. Residue H131 is the Proton acceptor; for ring-opening step of the active site. The active-site For ring-opening step is the E136.

It belongs to the glucosamine/galactosamine-6-phosphate isomerase family. NagB subfamily.

The enzyme catalyses alpha-D-glucosamine 6-phosphate + H2O = beta-D-fructose 6-phosphate + NH4(+). Its pathway is amino-sugar metabolism; N-acetylneuraminate degradation; D-fructose 6-phosphate from N-acetylneuraminate: step 5/5. In terms of biological role, catalyzes the reversible isomerization-deamination of glucosamine 6-phosphate (GlcN6P) to form fructose 6-phosphate (Fru6P) and ammonium ion. The chain is Glucosamine-6-phosphate deaminase from Bacillus cytotoxicus (strain DSM 22905 / CIP 110041 / 391-98 / NVH 391-98).